A 344-amino-acid chain; its full sequence is Transmembrane protein 268 (344 aa).

Residues Met1–Pro31 are disordered. The segment covering Gly14–Pro27 has biased composition (low complexity). The next 2 membrane-spanning stretches (helical) occupy residues Ala106 to Phe126 and Ala133 to Phe153. Positions Thr244 to Thr266 are disordered. Residues Glu247–Leu259 are compositionally biased toward low complexity.

In terms of assembly, interacts with ITGAM; this interaction inhibits ITGAM degradation via the endosome-lysosome pathway. Interacts with ITGB4; this interaction prevents ITGB4 degradation.

It is found in the cell membrane. Functionally, stabilizes cell surface expression of ITGAM and participates in the adhesion and migration of phagocytes during bacterial clearance. This chain is Transmembrane protein 268 (TMEM268), found in Bos taurus (Bovine).